Here is a 185-residue protein sequence, read N- to C-terminus: Adenylyl-sulfate kinase (185 aa).

13–20 (GLSGAGKS) provides a ligand contact to ATP. Residue S86 is the Phosphoserine intermediate of the active site.

Belongs to the APS kinase family.

It carries out the reaction adenosine 5'-phosphosulfate + ATP = 3'-phosphoadenylyl sulfate + ADP + H(+). It participates in sulfur metabolism; hydrogen sulfide biosynthesis; sulfite from sulfate: step 2/3. Catalyzes the synthesis of activated sulfate. This is Adenylyl-sulfate kinase from Myxococcus xanthus (strain DK1622).